The sequence spans 319 residues: Fructokinase (319 aa).

This sequence belongs to the carbohydrate kinase PfkB family. As to expression, expressed in swelling stolons and, at higher levels, in developing tubers. Low levels found in leaves and stems from tuberizing plants.

The catalysed reaction is D-fructose + ATP = D-fructose 6-phosphate + ADP + H(+). It participates in glycan biosynthesis; starch biosynthesis. May play an important role in maintaining the flux of carbon towards starch formation. In Solanum tuberosum (Potato), this protein is Fructokinase.